The chain runs to 254 residues: Ribonuclease HII (254 aa).

Residues 67–254 (IVIAGVDEVG…HRMSFLKNII (188 aa)) enclose the RNase H type-2 domain. Positions 73, 74, and 170 each coordinate a divalent metal cation.

It belongs to the RNase HII family. It depends on Mn(2+) as a cofactor. Mg(2+) is required as a cofactor.

The protein localises to the cytoplasm. The enzyme catalyses Endonucleolytic cleavage to 5'-phosphomonoester.. In terms of biological role, endonuclease that specifically degrades the RNA of RNA-DNA hybrids. This Clostridium acetobutylicum (strain ATCC 824 / DSM 792 / JCM 1419 / IAM 19013 / LMG 5710 / NBRC 13948 / NRRL B-527 / VKM B-1787 / 2291 / W) protein is Ribonuclease HII.